Consider the following 168-residue polypeptide: MSLPNPAELISQMAIRLKAHLEHRGISDPRYIGIRTGGVWVAQALLEALGSQSPLGTLDVSFYRDDFSQNGLHPQVRPSALPFEIEGQHLVLIDDVLMSGRTIRAAMNELFDYGRPASVTLVCLLDLDAAELPIRPNVVGATLTLAAHERVKLSGPSPLQLELQDLAL.

Residues 36 to 37, R77, 94 to 102, and V151 each bind substrate; these read TG and DDVLMSGRT. The PRPP-binding motif lies at 90 to 102; the sequence is LVLIDDVLMSGRT.

The protein belongs to the purine/pyrimidine phosphoribosyltransferase family. PyrR subfamily.

It carries out the reaction UMP + diphosphate = 5-phospho-alpha-D-ribose 1-diphosphate + uracil. In terms of biological role, regulates the transcription of the pyrimidine nucleotide (pyr) operon in response to exogenous pyrimidines. Also displays a weak uracil phosphoribosyltransferase activity which is not physiologically significant. This Pseudomonas fluorescens protein is Bifunctional protein PyrR.